The following is a 215-amino-acid chain: Cytidylate kinase (215 aa).

ATP is bound at residue 10 to 18 (GPAASGKGT).

Belongs to the cytidylate kinase family. Type 1 subfamily.

It localises to the cytoplasm. It catalyses the reaction CMP + ATP = CDP + ADP. The catalysed reaction is dCMP + ATP = dCDP + ADP. This chain is Cytidylate kinase, found in Bartonella tribocorum (strain CIP 105476 / IBS 506).